Consider the following 193-residue polypeptide: Holliday junction branch migration complex subunit RuvA (193 aa).

The interval methionine 1–leucine 64 is domain I. Residues threonine 65–leucine 139 form a domain II region. The tract at residues leucine 139–alanine 143 is flexible linker. Residues serine 144–valine 193 are domain III.

Belongs to the RuvA family. As to quaternary structure, homotetramer. Forms an RuvA(8)-RuvB(12)-Holliday junction (HJ) complex. HJ DNA is sandwiched between 2 RuvA tetramers; dsDNA enters through RuvA and exits via RuvB. An RuvB hexamer assembles on each DNA strand where it exits the tetramer. Each RuvB hexamer is contacted by two RuvA subunits (via domain III) on 2 adjacent RuvB subunits; this complex drives branch migration. In the full resolvosome a probable DNA-RuvA(4)-RuvB(12)-RuvC(2) complex forms which resolves the HJ.

Its subcellular location is the cytoplasm. In terms of biological role, the RuvA-RuvB-RuvC complex processes Holliday junction (HJ) DNA during genetic recombination and DNA repair, while the RuvA-RuvB complex plays an important role in the rescue of blocked DNA replication forks via replication fork reversal (RFR). RuvA specifically binds to HJ cruciform DNA, conferring on it an open structure. The RuvB hexamer acts as an ATP-dependent pump, pulling dsDNA into and through the RuvAB complex. HJ branch migration allows RuvC to scan DNA until it finds its consensus sequence, where it cleaves and resolves the cruciform DNA. This Burkholderia ambifaria (strain ATCC BAA-244 / DSM 16087 / CCUG 44356 / LMG 19182 / AMMD) (Burkholderia cepacia (strain AMMD)) protein is Holliday junction branch migration complex subunit RuvA.